Reading from the N-terminus, the 289-residue chain is Phosphate import ATP-binding protein PstB 2 (289 aa).

Residues Leu37 to Thr276 enclose the ABC transporter domain. ATP is bound at residue Gly69–Ser76.

This sequence belongs to the ABC transporter superfamily. Phosphate importer (TC 3.A.1.7) family. In terms of assembly, the complex is composed of two ATP-binding proteins (PstB), two transmembrane proteins (PstC and PstA) and a solute-binding protein (PstS).

Its subcellular location is the cell inner membrane. The catalysed reaction is phosphate(out) + ATP + H2O = ADP + 2 phosphate(in) + H(+). Part of the ABC transporter complex PstSACB involved in phosphate import. Responsible for energy coupling to the transport system. The polypeptide is Phosphate import ATP-binding protein PstB 2 (Trichormus variabilis (strain ATCC 29413 / PCC 7937) (Anabaena variabilis)).